The primary structure comprises 202 residues: Neuroligin-3 (202 aa).

Residues arginine 1–tryptophan 202 are Extracellular-facing. Cysteine 15 and cysteine 49 are oxidised to a cystine. N-linked (GlcNAc...) asparagine glycosylation is present at asparagine 50. Residues leucine 154–tryptophan 202 are disordered.

The protein belongs to the type-B carboxylesterase/lipase family. In terms of assembly, homodimer, and heterodimer with NLGN1 and NLGN2. Interacts with neurexins NRXN1, NRXN2 and NRXN3. Interaction with neurexins is mediated by heparan sulfate glycan modification on neurexin. Interacts (via its C-terminus) with DLG4/PSD-95 (via PDZ domain 3).

The protein localises to the cell membrane. The protein resides in the synapse. Its function is as follows. Cell surface protein involved in cell-cell-interactions via its interactions with neurexin family members. Plays a role in synapse function and synaptic signal transmission, and probably mediates its effects by recruiting and clustering other synaptic proteins. May promote the initial formation of synapses, but is not essential for this. May also play a role in glia-glia or glia-neuron interactions in the developing peripheral nervous system. This Macaca mulatta (Rhesus macaque) protein is Neuroligin-3 (NLGN3).